The following is a 520-amino-acid chain: F-box/LRR-repeat protein At3g59200 (520 aa).

The F-box domain occupies 6 to 54 (RDRISSLPNPVVSHILSFLPTKEAASTSVLSKKWRYLFAYVTNLDFDDS). 3 LRR repeats span residues 170–197 (CVDV…VLMN), 219–244 (FCEE…EYSD), and 340–365 (NSEI…VLKR).

The sequence is that of F-box/LRR-repeat protein At3g59200 from Arabidopsis thaliana (Mouse-ear cress).